Consider the following 692-residue polypeptide: PTS system glucoside-specific EIICBA component (692 aa).

The PTS EIIC type-1 domain maps to 6 to 430 (KKFFGQLQRI…LNLKTPGRED (425 aa)). The next 10 helical transmembrane spans lie at 15–35 (IGKALMLPVAILPAAGILLTF), 84–104 (LGLAGGDGVAGIAALVGYLIM), 140–160 (LVLGIPTLQTGVFGGIIIGAL), 185–205 (FVPIITSLVAIVTGIVLSFVW), 215–235 (LSNFLLGKNLALTTFIFGIIE), 287–307 (AFTTGKYPFMMFGLPAAAFAI), 318–338 (VVGGLMLSAALTSFLTGITEP), 344–364 (LFVAPILYVAHVILAGTSFLI), 370–390 (VQIGMTFSGGFIDYILYGLLS), and 398–418 (LVIPVGIAYALIYYFLFTFLI). The PTS EIIB type-1 domain occupies 441–522 (SELPFEVLEA…QQIMDGKITS (82 aa)). Cys-463 acts as the Phosphocysteine intermediate; for EIIB activity in catalysis. A PTS EIIA type-1 domain is found at 563-667 (DKVFSAKMMG…DTITPIIITN (105 aa)). His-615 functions as the Tele-phosphohistidine intermediate; for EIIA activity in the catalytic mechanism.

The protein localises to the cell membrane. Inhibited by methyl alpha-D-glucoside, methyl beta-D-glucoside, p-nitrophenyl alpha-D-glucoside, o-nitrophenyl beta-D-glucoside and salicin, but not by 2-deoxyglucose. The phosphoenolpyruvate-dependent sugar phosphotransferase system (sugar PTS), a major carbohydrate active -transport system, catalyzes the phosphorylation of incoming sugar substrates concomitantly with their translocation across the cell membrane. This system is involved in alpha- and beta-glucoside transport. Can also transport glucose, but not galactose, fructose, mannose, cellobiose, sucrose, maltose, lactose, melibiose and trehalose, as well as N-acetylglucosamine. The protein is PTS system glucoside-specific EIICBA component (glcB) of Staphylococcus carnosus (strain TM300).